A 118-amino-acid chain; its full sequence is uncharacterized protein (118 aa).

To E.coli YeaO.

This is an uncharacterized protein from Mycobacterium bovis (strain ATCC BAA-935 / AF2122/97).